Consider the following 289-residue polypeptide: tRNA pseudouridine synthase A (289 aa).

The active-site Nucleophile is D67. Y125 provides a ligand contact to substrate.

Belongs to the tRNA pseudouridine synthase TruA family. As to quaternary structure, homodimer.

It catalyses the reaction uridine(38/39/40) in tRNA = pseudouridine(38/39/40) in tRNA. Its function is as follows. Formation of pseudouridine at positions 38, 39 and 40 in the anticodon stem and loop of transfer RNAs. The chain is tRNA pseudouridine synthase A from Prochlorococcus marinus (strain MIT 9211).